A 574-amino-acid polypeptide reads, in one-letter code: Protein NDNF (574 aa).

The signal sequence occupies residues 1–19 (MTWRCGCYGLVLLVLGVMG). The interval 97–118 (EDRSGEGSGEPEPLEQQKQQVT) is disordered. 2 Fibronectin type-III domains span residues 174–329 (PELP…TNMS) and 451–560 (PALP…SGHS). Residue N327 is glycosylated (N-linked (GlcNAc...) asparagine).

The protein localises to the secreted. In terms of biological role, secretory protein that plays a role in various cellular processes. Acts as a chemorepellent acting on gonadotropin-releasing hormone (GnRH) expressing neurons regulating their migration to the hypothalamus. Also promotes neuron migration, growth and survival as well as neurite outgrowth and is involved in the development of the olfactory system. May also act through the regulation of growth factors activity and downstream signaling. Also regulates extracellular matrix assembly and cell adhesiveness. Promotes endothelial cell survival, vessel formation and plays an important role in the process of revascularization through NOS3-dependent mechanisms. The protein is Protein NDNF (ndnf) of Danio rerio (Zebrafish).